The chain runs to 1102 residues: Putative ISWI chromatin-remodeling complex subunit YPL216W (1102 aa).

The region spanning 23-131 is the WAC domain; that stretch reads ETPWVIKESS…DTVCLKTIQK (109 aa). A disordered region spans residues 271-301; sequence ELYTPLTIPPESDVEPADWKETSETSETSET. A DDT domain is found at 375 to 435; it reads QFPTERLLVV…FLKTYNSKGS (61 aa). Residues 673–743 adopt a coiled-coil conformation; it reads CNGIRLKLDS…EDIAFLEAKL (71 aa).

The protein resides in the nucleus. May be required for the activity of an ISWI chromatin-remodeling complex. This chain is Putative ISWI chromatin-remodeling complex subunit YPL216W, found in Saccharomyces cerevisiae (strain ATCC 204508 / S288c) (Baker's yeast).